A 161-amino-acid polypeptide reads, in one-letter code: Phosphopantetheine adenylyltransferase (161 aa).

A substrate-binding site is contributed by Ser11. ATP is bound by residues 11–12 (SF) and His19. Positions 43, 75, and 89 each coordinate substrate. Residues 90 to 92 (GLR), Glu100, and 125 to 131 (YSYLSSS) each bind ATP.

This sequence belongs to the bacterial CoaD family. Homohexamer. It depends on Mg(2+) as a cofactor.

The protein localises to the cytoplasm. It carries out the reaction (R)-4'-phosphopantetheine + ATP + H(+) = 3'-dephospho-CoA + diphosphate. Its pathway is cofactor biosynthesis; coenzyme A biosynthesis; CoA from (R)-pantothenate: step 4/5. Functionally, reversibly transfers an adenylyl group from ATP to 4'-phosphopantetheine, yielding dephospho-CoA (dPCoA) and pyrophosphate. This chain is Phosphopantetheine adenylyltransferase, found in Geotalea daltonii (strain DSM 22248 / JCM 15807 / FRC-32) (Geobacter daltonii).